The sequence spans 609 residues: Pentatricopeptide repeat-containing protein At5g13770, chloroplastic (609 aa).

The transit peptide at 1 to 44 (MAIASGSWVATVNHHANPHSFTSPTKPIFFLSQKPHNFHVCSSR) directs the protein to the chloroplast. PPR repeat units follow at residues 103–137 (ELRT…KALP), 138–168 (DGQT…FRSD), 172–207 (AVSA…GVEP), 208–242 (SPGC…RLSF), 247–281 (SGSI…GIPE), 282–316 (SSEL…KLLK), 317–351 (DPEM…ELKV), 352–386 (TDCI…ECEA), 387–421 (GQVT…GFDK), 422–456 (CVVA…GCKP), 457–491 (NIWI…KVLP), 492–526 (DKVS…RGKI), and 527–561 (DRAM…GTRL).

It belongs to the PPR family. P subfamily.

It is found in the plastid. It localises to the chloroplast. The sequence is that of Pentatricopeptide repeat-containing protein At5g13770, chloroplastic from Arabidopsis thaliana (Mouse-ear cress).